The chain runs to 183 residues: Ribosome maturation factor RimM (183 aa).

Residues 105 to 181 (ANEYHLMDLI…RIEIDPPLGL (77 aa)) enclose the PRC barrel domain.

It belongs to the RimM family. Binds ribosomal protein uS19.

It is found in the cytoplasm. An accessory protein needed during the final step in the assembly of 30S ribosomal subunit, possibly for assembly of the head region. Essential for efficient processing of 16S rRNA. May be needed both before and after RbfA during the maturation of 16S rRNA. It has affinity for free ribosomal 30S subunits but not for 70S ribosomes. This is Ribosome maturation factor RimM from Thermosynechococcus vestitus (strain NIES-2133 / IAM M-273 / BP-1).